The following is a 281-amino-acid chain: Putative dehydrogenase/reductase SDR family member 4-like 1 (281 aa).

Residue 36 to 60 (LVTASTDWIGFAVAQRLAQDGAHVV) participates in NADP(+) binding. Ser-172 contacts substrate. The Proton acceptor role is filled by Tyr-185. Lys-189 lines the NADP(+) pocket. A Peroxisomal targeting signal motif is present at residues 279-281 (SRL).

This sequence belongs to the short-chain dehydrogenases/reductases (SDR) family.

Functionally, putative oxidoreductase. The protein is Putative dehydrogenase/reductase SDR family member 4-like 1 of Homo sapiens (Human).